The following is a 164-amino-acid chain: Seripauperin-21 (164 aa).

This sequence belongs to the SRP1/TIP1 family. Seripauperin subfamily.

This chain is Seripauperin-21 (PAU21), found in Saccharomyces cerevisiae (strain ATCC 204508 / S288c) (Baker's yeast).